Here is a 126-residue protein sequence, read N- to C-terminus: Phosphoribosyl-AMP cyclohydrolase (126 aa).

Aspartate 73 serves as a coordination point for Mg(2+). Position 74 (cysteine 74) interacts with Zn(2+). Mg(2+) is bound by residues aspartate 75 and aspartate 77. Cysteine 91 and cysteine 98 together coordinate Zn(2+).

It belongs to the PRA-CH family. In terms of assembly, homodimer. Requires Mg(2+) as cofactor. Zn(2+) serves as cofactor.

The protein localises to the cytoplasm. It carries out the reaction 1-(5-phospho-beta-D-ribosyl)-5'-AMP + H2O = 1-(5-phospho-beta-D-ribosyl)-5-[(5-phospho-beta-D-ribosylamino)methylideneamino]imidazole-4-carboxamide. It participates in amino-acid biosynthesis; L-histidine biosynthesis; L-histidine from 5-phospho-alpha-D-ribose 1-diphosphate: step 3/9. In terms of biological role, catalyzes the hydrolysis of the adenine ring of phosphoribosyl-AMP. The protein is Phosphoribosyl-AMP cyclohydrolase of Solibacter usitatus (strain Ellin6076).